Here is a 476-residue protein sequence, read N- to C-terminus: Sulfate adenylyltransferase subunit 1 (476 aa).

Positions 24-239 (KSLLRFLTCG…LLETVDVDHE (216 aa)) constitute a tr-type G domain. Residues 33–40 (GSVDDGKS) form a G1 region. 33–40 (GSVDDGKS) serves as a coordination point for GTP. The tract at residues 91–95 (GITID) is G2. The G3 stretch occupies residues 112–115 (DTPG). GTP contacts are provided by residues 112-116 (DTPGH) and 167-170 (NKMD). The tract at residues 167-170 (NKMD) is G4. A G5 region spans residues 205 to 207 (SAL).

This sequence belongs to the TRAFAC class translation factor GTPase superfamily. Classic translation factor GTPase family. CysN/NodQ subfamily. As to quaternary structure, heterodimer composed of CysD, the smaller subunit, and CysN.

It carries out the reaction sulfate + ATP + H(+) = adenosine 5'-phosphosulfate + diphosphate. The protein operates within sulfur metabolism; hydrogen sulfide biosynthesis; sulfite from sulfate: step 1/3. Functionally, with CysD forms the ATP sulfurylase (ATPS) that catalyzes the adenylation of sulfate producing adenosine 5'-phosphosulfate (APS) and diphosphate, the first enzymatic step in sulfur assimilation pathway. APS synthesis involves the formation of a high-energy phosphoric-sulfuric acid anhydride bond driven by GTP hydrolysis by CysN coupled to ATP hydrolysis by CysD. The polypeptide is Sulfate adenylyltransferase subunit 1 (Vibrio campbellii (strain ATCC BAA-1116)).